The sequence spans 1191 residues: DNA-directed RNA polymerase subunit beta (1191 aa).

The interval 1164 to 1191 (EEEDLQPADALNIAPQPDTEEEPVESFE) is disordered. A compositionally biased stretch (acidic residues) spans 1181 to 1191 (DTEEEPVESFE).

Belongs to the RNA polymerase beta chain family. In terms of assembly, the RNAP catalytic core consists of 2 alpha, 1 beta, 1 beta' and 1 omega subunit. When a sigma factor is associated with the core the holoenzyme is formed, which can initiate transcription.

It carries out the reaction RNA(n) + a ribonucleoside 5'-triphosphate = RNA(n+1) + diphosphate. Functionally, DNA-dependent RNA polymerase catalyzes the transcription of DNA into RNA using the four ribonucleoside triphosphates as substrates. This chain is DNA-directed RNA polymerase subunit beta, found in Lysinibacillus sphaericus (strain C3-41).